Here is a 157-residue protein sequence, read N- to C-terminus: Capsid protein (157 aa).

Serine 2 bears the N-acetylserine; by host mark.

This sequence belongs to the virgaviridae capsid protein family.

The protein localises to the virion. Capsid protein self-assembles to form rod-shaped virions about 18 nm in diameter with a central canal enclosing the viral genomic RNA. The chain is Capsid protein (CP) from Tomato mosaic virus (strain Korean) (ToMV).